The primary structure comprises 54 residues: Potassium channel toxin alpha-KTx 14.3 (54 aa).

The first 23 residues, 1–23 (MKIFFAILLILAVCSMAIWTVNG), serve as a signal peptide directing secretion.

It belongs to the short scorpion toxin superfamily. Potassium channel inhibitor family. Alpha-KTx 14 subfamily. Post-translationally, contains 3 disulfide bridges. As to expression, expressed by the venom gland.

It is found in the secreted. In terms of biological role, potential blocker of potassium channels. The sequence is that of Potassium channel toxin alpha-KTx 14.3 from Olivierus martensii (Manchurian scorpion).